The primary structure comprises 413 residues: MIENLQPLRGMKDLLPNDYQIHNYIINKARDVGALYGYKQMSTPILEYTKVFNRSMGESSDVMSKEIYSFVDKSNNAVALRPEFTSGIIRSFISNGLQHKLPLKFFSTGPVFRYDRPQAGRQRQFHQLNYEYLGAKGAITDAETVKLAVDILKALEIEEDTTLELNSLGCHESRIVYQQKLVEYLNDFKDQLSGESRLRLNKNPMRILDSKSEIDQKIIAHAPILSEYHTNESKKYFDELQKYLDILGIKYSVNPRLVRGLDYYCHTVFEFTTKKLGSQSTILAGGRYDMLSRIMGNYDVHAIGFAAGIERIALMREYKISVIKPVFVLPIGKNNICYALDIVDKLRLQNIVSIIDPIGKIAKRIQRVLNEDAKFIIFIGDEEKMNNNLKFKDLKNQKEYIIDFEKVLELLKQ.

This sequence belongs to the class-II aminoacyl-tRNA synthetase family. As to quaternary structure, homodimer.

It localises to the cytoplasm. The catalysed reaction is tRNA(His) + L-histidine + ATP = L-histidyl-tRNA(His) + AMP + diphosphate + H(+). This is Histidine--tRNA ligase (hisS) from Rickettsia prowazekii (strain Madrid E).